Consider the following 894-residue polypeptide: Leucine--tRNA ligase, mitochondrial (894 aa).

A mitochondrion-targeting transit peptide spans 1 to 9; sequence MLSRPSSRF. Positions 56–66 match the 'HIGH' region motif; sequence PYPSGALHIGH. The 'KMSKS' region motif lies at 646 to 650; sequence KMSKS. Lys-649 contributes to the ATP binding site.

The protein belongs to the class-I aminoacyl-tRNA synthetase family.

The protein resides in the mitochondrion matrix. It carries out the reaction tRNA(Leu) + L-leucine + ATP = L-leucyl-tRNA(Leu) + AMP + diphosphate. In terms of biological role, catalyzes the attachment of leucine to tRNA(Leu) in the mitochondrion. The polypeptide is Leucine--tRNA ligase, mitochondrial (NAM2) (Saccharomyces cerevisiae (strain ATCC 204508 / S288c) (Baker's yeast)).